A 909-amino-acid polypeptide reads, in one-letter code: Protein NLP1 (909 aa).

Disordered stretches follow at residues 51 to 71, 536 to 556, 568 to 605, and 690 to 745; these read KSLK…DNSP, KEDP…PVPN, ASTP…RAKT, and NSPN…ENTG. Polar residues predominate over residues 55-70; the sequence is QTEQSPSASTAMNDNS. The RWP-RK domain maps to 595 to 676; the sequence is RRPGEKKRAK…MDSVQGAQGS (82 aa). The segment covering 690 to 716 has biased composition (polar residues); that stretch reads NSPNMSSNGPSLKSNEQPSHLNAQTDN. Low complexity predominate over residues 725-745; sequence RSPSSSCSKSSGSSNNNENTG. One can recognise a PB1 domain in the interval 811–894; sequence AIKVKATFGE…HTIKISLNEA (84 aa).

The protein localises to the nucleus. In terms of biological role, probable transcription factor. This chain is Protein NLP1 (NLP1), found in Arabidopsis thaliana (Mouse-ear cress).